Reading from the N-terminus, the 314-residue chain is MLSVNELALEIFDNLADLAEEFNAVYHELDNGARIVDCGVSTRGGYAAGRAFTEICMGGLGEVNFRMGQIKEFPQPFIDVNTDFPSIACLGAQKAGWTVKVGNYFAMGSGPARALSLKPKHTYEVIDYEDDYDCAVICLESDHLPNAEVMNKIAEECHVDVANTCAVVAPTSSIVGSIQVSGRCVETAIYKLNELGFDTRKIASAIGTAPIPPVRGAKRAMGVTNDATIYHGQIQLTMNAPEIKDYLEKIPSSKSKGYGKPFNDIFKEAGYDFYKIDTSLFSPAEVIINELSDGSVYRVGAVNTDVTLKSFGLQ.

It belongs to the MCH family.

It is found in the cytoplasm. The enzyme catalyses 5,10-methenyl-5,6,7,8-tetrahydromethanopterin + H2O = N(5)-formyl-5,6,7,8-tetrahydromethanopterin + H(+). It participates in one-carbon metabolism; methanogenesis from CO(2); 5,10-methenyl-5,6,7,8-tetrahydromethanopterin from CO(2): step 3/3. In terms of biological role, catalyzes the reversible interconversion of 5-formyl-H(4)MPT to methenyl-H(4)MPT(+). The chain is Methenyltetrahydromethanopterin cyclohydrolase from Methanoregula boonei (strain DSM 21154 / JCM 14090 / 6A8).